A 781-amino-acid chain; its full sequence is Beta-mannosyltransferase 4 (781 aa).

The Cytoplasmic portion of the chain corresponds to 1–17 (MTKSYMPLFRSPRQFKK). Residues 18–38 (IYFILIPLILAVIILHVFFDG) form a helical membrane-spanning segment. Topologically, residues 39–781 (FNKISEYSPT…EKEDDDDIEV (743 aa)) are extracellular. Positions 640–733 (KLGDSEAAIK…AKDEDKNEDE (94 aa)) form a coiled coil. Basic and acidic residues-rich tracts occupy residues 663-728 (KAEK…KDED) and 736-750 (KEKN…KSEV). Residues 663-781 (KAEKEKAEKE…EKEDDDDIEV (119 aa)) are disordered. Residues 751–781 (EENGENTNEGGEDDGDGDGEEEKEDDDDIEV) are compositionally biased toward acidic residues.

It belongs to the BMT family.

The protein localises to the membrane. Its function is as follows. Beta-mannosyltransferase involved in cell wall biosynthesis. Required for the elongation of beta-mannose chains on the acid-labile fraction of cell wall phosphopeptidomannan. This Candida albicans (strain SC5314 / ATCC MYA-2876) (Yeast) protein is Beta-mannosyltransferase 4 (BMT4).